We begin with the raw amino-acid sequence, 360 residues long: Peptide chain release factor 1 (360 aa).

At Gln-235 the chain carries N5-methylglutamine.

This sequence belongs to the prokaryotic/mitochondrial release factor family. Post-translationally, methylated by PrmC. Methylation increases the termination efficiency of RF1.

It localises to the cytoplasm. Peptide chain release factor 1 directs the termination of translation in response to the peptide chain termination codons UAG and UAA. This chain is Peptide chain release factor 1, found in Burkholderia multivorans (strain ATCC 17616 / 249).